Here is a 168-residue protein sequence, read N- to C-terminus: S-ribosylhomocysteine lyase (168 aa).

Fe cation contacts are provided by histidine 54, histidine 58, and cysteine 128.

Belongs to the LuxS family. As to quaternary structure, homodimer. It depends on Fe cation as a cofactor.

It carries out the reaction S-(5-deoxy-D-ribos-5-yl)-L-homocysteine = (S)-4,5-dihydroxypentane-2,3-dione + L-homocysteine. Functionally, involved in the synthesis of autoinducer 2 (AI-2) which is secreted by bacteria and is used to communicate both the cell density and the metabolic potential of the environment. The regulation of gene expression in response to changes in cell density is called quorum sensing. Catalyzes the transformation of S-ribosylhomocysteine (RHC) to homocysteine (HC) and 4,5-dihydroxy-2,3-pentadione (DPD). This Actinobacillus succinogenes (strain ATCC 55618 / DSM 22257 / CCUG 43843 / 130Z) protein is S-ribosylhomocysteine lyase.